The chain runs to 219 residues: Octanoyltransferase (219 aa).

One can recognise a BPL/LPL catalytic domain in the interval 37-219 (EHSPDQLWIL…DFNDVQVILQ (183 aa)). Substrate is bound by residues 76 to 83 (RGGQVTWH), 143 to 145 (SLG), and 156 to 158 (GLA). The Acyl-thioester intermediate role is filled by C174.

The protein belongs to the LipB family.

Its subcellular location is the cytoplasm. The catalysed reaction is octanoyl-[ACP] + L-lysyl-[protein] = N(6)-octanoyl-L-lysyl-[protein] + holo-[ACP] + H(+). It functions in the pathway protein modification; protein lipoylation via endogenous pathway; protein N(6)-(lipoyl)lysine from octanoyl-[acyl-carrier-protein]: step 1/2. Catalyzes the transfer of endogenously produced octanoic acid from octanoyl-acyl-carrier-protein onto the lipoyl domains of lipoate-dependent enzymes. Lipoyl-ACP can also act as a substrate although octanoyl-ACP is likely to be the physiological substrate. This chain is Octanoyltransferase, found in Acinetobacter baylyi (strain ATCC 33305 / BD413 / ADP1).